The chain runs to 86 residues: Parvalbumin beta 3 (86 aa).

Residue alanine 1 is modified to N-acetylalanine. The EF-hand domain maps to 35-70; it reads LSPEEVKKFFAIIDQDHSGFIEEEELKLFLQTFSAG. Aspartate 48, aspartate 50, serine 52, phenylalanine 54, glutamate 56, and glutamate 59 together coordinate Ca(2+).

Belongs to the parvalbumin family.

Its function is as follows. In muscle, parvalbumin is thought to be involved in relaxation after contraction. It binds two calcium ions. The sequence is that of Parvalbumin beta 3 from Merluccius hubbsi (Argentine hake).